Here is a 367-residue protein sequence, read N- to C-terminus: bZIP transcription factor 18 (367 aa).

Residues 1–57 form a disordered region; it reads MEDPSNPQPNQSNLSQCPPLATAPTPAPVRGPYHRRAHSEVQFRLPEDLDLSEPFGG. Residues 38-47 show a composition bias toward basic and acidic residues; sequence HSEVQFRLPE. Ser70 bears the Phosphoserine mark. Residues 79-124 form a disordered region; the sequence is SGSGSASDSAGPSAPRSDNPFSAENGGAEAGNSRPRHRHSLSVDGS. Low complexity predominate over residues 82–96; the sequence is GSASDSAGPSAPRSD. Residues 148–211 enclose the bZIP domain; that stretch reads DPKRAKRIIA…TGLSSENTEL (64 aa). Residues 150 to 171 are basic motif; sequence KRAKRIIANRQSAARSKERKAR. A coiled-coil region spans residues 166–245; sequence KERKARYILE…VERLKFATGE (80 aa). Positions 176 to 190 are leucine-zipper; it reads LERKVQTLQTEATTL. Composition is skewed to polar residues over residues 294–309, 317–328, and 354–367; these read QPNNNQNQSSRTNPPT, ATSNAPAQSHSY, and FGRSDTVSESSSTM. Disordered stretches follow at residues 294–330 and 343–367; these read QPNNNQNQSSRTNPPTAHQLMHHATSNAPAQSHSYSE and LDISSCGRGSNFGRSDTVSESSSTM.

As to quaternary structure, interacts with NEAP1. Forms homodimer and heterodimer with bZIP34 and bZIP61. As to expression, ubiquitous. Strongly expressed in mature pollen.

Its subcellular location is the nucleus. The protein localises to the nucleoplasm. It localises to the cytoplasm. The protein resides in the perinuclear region. Functionally, transcription factor that may participate with bZIP34 in the gametophytic control of pollen development. The protein is bZIP transcription factor 18 of Arabidopsis thaliana (Mouse-ear cress).